The primary structure comprises 197 residues: Recombination protein RecR (197 aa).

A C4-type zinc finger spans residues 56–71 (CERCNTFTETEICQRC). The Toprim domain maps to 79 to 174 (SLLCVVEMPA…RVSRLSRGVP (96 aa)).

Belongs to the RecR family.

Functionally, may play a role in DNA repair. It seems to be involved in an RecBC-independent recombinational process of DNA repair. It may act with RecF and RecO. The protein is Recombination protein RecR of Aromatoleum aromaticum (strain DSM 19018 / LMG 30748 / EbN1) (Azoarcus sp. (strain EbN1)).